Consider the following 714-residue polypeptide: RB-associated KRAB zinc finger protein (714 aa).

In terms of domain architecture, KRAB spans 8–79 (VSFKDVAVDF…GGEFPCQHSP (72 aa)). Residues K97 and K259 each participate in a glycyl lysine isopeptide (Lys-Gly) (interchain with G-Cter in SUMO2) cross-link. The tract at residues 171 to 260 (TYHGEKMCEF…YQRSQMEMKP (90 aa)) is required for interaction with RB1. 2 consecutive C2H2-type zinc fingers follow at residues 261-283 (FECS…QRAH) and 289-311 (YECN…RRSH). A Glycyl lysine isopeptide (Lys-Gly) (interchain with G-Cter in SUMO2) cross-link involves residue K315. 7 consecutive C2H2-type zinc fingers follow at residues 317-339 (YKCN…LRTH), 345-367 (YECS…QRNH), 373-395 (YPCN…QRTH), 401-423 (YKCN…QRTH), 429-451 (YQCS…YRSH), 457-479 (YECN…RKVH), and 485-505 (HECS…HTAH). A Glycyl lysine isopeptide (Lys-Gly) (interchain with G-Cter in SUMO2) cross-link involves residue K357. Positions 417 to 714 (ITHQRTHTGE…NMNVLDVENL (298 aa)) are interaction with AR. The C2H2-type 10; degenerate zinc-finger motif lies at 511 to 533 (YECNECGKTFLVNSAFDGHQPLP). Residues K534 and K537 each participate in a glycyl lysine isopeptide (Lys-Gly) (interchain with G-Cter in SUMO2) cross-link. C2H2-type zinc fingers lie at residues 539–561 (YECN…YRSH), 567–589 (YGCS…QRVH), 595–617 (YECY…HRIH), 623–645 (YECS…YRSH), 651–673 (YECN…YRTH), and 679–701 (YECN…QRIH).

It belongs to the krueppel C2H2-type zinc-finger protein family. As to quaternary structure, interacts with AR and RB1. May also interact with other nuclear hormone receptors such as NR3C1/GR. As to expression, expressed in bone, brain, heart, kidney, liver, lung, pancreas and placenta.

Its subcellular location is the nucleus. May repress E2F-dependent transcription. May promote AR-dependent transcription. In Homo sapiens (Human), this protein is RB-associated KRAB zinc finger protein (RBAK).